The chain runs to 321 residues: Type 3 secretion system translocon protein SctB (321 aa).

Residues 99–119 traverse the membrane as a helical segment; it reads AALIGGAISSVLGILGSFAAI.

It belongs to the SctB/EspB family. As to quaternary structure, the core secretion machinery of the T3SS is composed of approximately 20 different proteins, including cytoplasmic components, a base, an export apparatus and a needle. This subunit is involved in the formation of a pore, called the translocon, in host membrane.

It localises to the secreted. The protein resides in the cell surface. Its subcellular location is the host membrane. Component of the type III secretion system (T3SS), also called injectisome, which is used to inject bacterial effector proteins into eukaryotic host cells. EspD and EspB are inserted into the host membrane where they form a pore and allow the translocation of effector proteins into the cytosol of target cells. Necessary for intimate attachment to epithelial cells. The polypeptide is Type 3 secretion system translocon protein SctB (Escherichia coli O127:H6 (strain E2348/69 / EPEC)).